The chain runs to 169 residues: MVRFKSRYLLCELCVSEPSSLHLFEDKVVYQALRGAVNRAHGDYGAAIFNITLGVLVKYLNAHTGVVLIRCRKAHYRLVWSSLPFITFLENRGQKVRCFFNCIHVGGTIRTSQKFLIKYNRQQLQRMLLDCKTDAEKQDVRKAILSCSLNLIKGEETDGSDDDGDEEDT.

It belongs to the eukaryotic/archaeal RNase P protein component 2 family. In terms of assembly, component of nuclear RNase P and RNase MRP ribonucleoproteins. RNase P consists of a catalytic RNA moiety and 10 different protein chains; POP1, POP4, POP5, POP7, RPP14, RPP21, RPP25, RPP30, RPP38 and RPP40. Within the RNase P complex, POP1, POP7 and RPP25 form the 'finger' subcomplex, POP5, RPP14, RPP40 and homodimeric RPP30 form the 'palm' subcomplex, and RPP21, POP4 and RPP38 form the 'wrist' subcomplex. All subunits of the RNase P complex interact with the catalytic RNA. Several subunits of RNase P are also part of the RNase MRP complex. RNase MRP consists of a catalytic RNA moiety and about 8 protein subunits; POP1, POP7, RPP25, RPP30, RPP38, RPP40 and possibly also POP4 and POP5.

It is found in the nucleus. The protein localises to the nucleolus. Its function is as follows. Component of ribonuclease P, a protein complex that generates mature tRNA molecules by cleaving their 5'-ends. Also a component of the MRP ribonuclease complex, which cleaves pre-rRNA sequences. The sequence is that of Ribonuclease P/MRP protein subunit POP5 (pop5) from Danio rerio (Zebrafish).